Reading from the N-terminus, the 1026-residue chain is Multidrug resistance protein MdtC (1026 aa).

Helical transmembrane passes span 15-35 (ILIA…LPVA), 333-353 (EVEE…FLFL), 360-380 (LIPA…MYLC), 387-407 (LSLM…IVVL), 431-451 (VGFT…PLLL), 463-483 (FAVT…TLTP), 528-548 (LVGV…IAIP), 853-873 (LILI…LYES), 897-917 (LFNA…IGIV), 953-973 (PIMM…LSDG), and 984-1004 (ITIV…TPVV).

Belongs to the resistance-nodulation-cell division (RND) (TC 2.A.6) family. MdtC subfamily. Part of a tripartite efflux system composed of MdtA, MdtB and MdtC. MdtC forms a heteromultimer with MdtB.

The protein localises to the cell inner membrane. The sequence is that of Multidrug resistance protein MdtC from Salmonella heidelberg (strain SL476).